A 319-amino-acid chain; its full sequence is Acetyl-coenzyme A carboxylase carboxyl transferase subunit alpha (319 aa).

In terms of domain architecture, CoA carboxyltransferase C-terminal spans 32 to 293 (NVDTEVRALE…KAVLLNELEA (262 aa)).

The protein belongs to the AccA family. In terms of assembly, acetyl-CoA carboxylase is a heterohexamer composed of biotin carboxyl carrier protein (AccB), biotin carboxylase (AccC) and two subunits each of ACCase subunit alpha (AccA) and ACCase subunit beta (AccD).

The protein resides in the cytoplasm. The enzyme catalyses N(6)-carboxybiotinyl-L-lysyl-[protein] + acetyl-CoA = N(6)-biotinyl-L-lysyl-[protein] + malonyl-CoA. It participates in lipid metabolism; malonyl-CoA biosynthesis; malonyl-CoA from acetyl-CoA: step 1/1. In terms of biological role, component of the acetyl coenzyme A carboxylase (ACC) complex. First, biotin carboxylase catalyzes the carboxylation of biotin on its carrier protein (BCCP) and then the CO(2) group is transferred by the carboxyltransferase to acetyl-CoA to form malonyl-CoA. The chain is Acetyl-coenzyme A carboxylase carboxyl transferase subunit alpha from Xylella fastidiosa (strain M12).